We begin with the raw amino-acid sequence, 178 residues long: Protein GrpE (178 aa).

It belongs to the GrpE family. In terms of assembly, homodimer.

It is found in the cytoplasm. Its function is as follows. Participates actively in the response to hyperosmotic and heat shock by preventing the aggregation of stress-denatured proteins, in association with DnaK and GrpE. It is the nucleotide exchange factor for DnaK and may function as a thermosensor. Unfolded proteins bind initially to DnaJ; upon interaction with the DnaJ-bound protein, DnaK hydrolyzes its bound ATP, resulting in the formation of a stable complex. GrpE releases ADP from DnaK; ATP binding to DnaK triggers the release of the substrate protein, thus completing the reaction cycle. Several rounds of ATP-dependent interactions between DnaJ, DnaK and GrpE are required for fully efficient folding. The polypeptide is Protein GrpE (Rickettsia akari (strain Hartford)).